Consider the following 393-residue polypeptide: 5-amino-6-(D-ribitylamino)uracil--L-tyrosine 4-hydroxyphenyl transferase (393 aa).

One can recognise a Radical SAM core domain in the interval 67–322 (VTYVINRNIN…GQWIVNHQPS (256 aa)). [4Fe-4S] cluster contacts are provided by Cys-81, Cys-85, and Cys-88.

Belongs to the radical SAM superfamily. CofH family. Consists of two subunits, CofG and CofH. Requires [4Fe-4S] cluster as cofactor.

The enzyme catalyses 5-amino-6-(D-ribitylamino)uracil + L-tyrosine + S-adenosyl-L-methionine = 5-amino-5-(4-hydroxybenzyl)-6-(D-ribitylimino)-5,6-dihydrouracil + 2-iminoacetate + 5'-deoxyadenosine + L-methionine + H(+). Its pathway is cofactor biosynthesis; coenzyme F0 biosynthesis. Functionally, catalyzes the radical-mediated synthesis of 5-amino-5-(4-hydroxybenzyl)-6-(D-ribitylimino)-5,6-dihydrouracil from 5-amino-6-(D-ribitylamino)uracil and L-tyrosine. This Thermosynechococcus vestitus (strain NIES-2133 / IAM M-273 / BP-1) protein is 5-amino-6-(D-ribitylamino)uracil--L-tyrosine 4-hydroxyphenyl transferase.